The sequence spans 1011 residues: Protein translocase subunit SecA, chloroplastic (1011 aa).

Over residues 1–17 (MATSSLCSSFTSQTCNP) the composition is skewed to polar residues. A disordered region spans residues 1 to 22 (MATSSLCSSFTSQTCNPHSRPH). A chloroplast-targeting transit peptide spans 1-59 (MATSSLCSSFTSQTCNPHSRPHRKTLTLPGSVFLCRQFHLNSPSVSKTRRIRTRQSGPV). 164–171 (MRTGEGKT) is an ATP binding site. Positions 976 to 1011 (QDKMENQKSGKRNARPPTDTNPDPVGTVEPSTSASS) are disordered.

This sequence belongs to the SecA family.

It localises to the plastid. The protein resides in the chloroplast stroma. Its subcellular location is the chloroplast thylakoid membrane. It catalyses the reaction ATP + H2O + chloroplast-proteinSide 1 = ADP + phosphate + chloroplast-proteinSide 2.. Functionally, has a central role in coupling the hydrolysis of ATP to the transfer of proteins across the thylakoid membrane. Facilitates the transport of precursor proteins from the chloroplast stroma to thylakoid lumen. In Pisum sativum (Garden pea), this protein is Protein translocase subunit SecA, chloroplastic.